Consider the following 777-residue polypeptide: Acyl-CoA dehydrogenase family member 11 (777 aa).

FAD-binding positions include 501 to 511 (FCMTEPDVASS), 509 to 511 (ASS), 535 to 537 (WSS), and S537. A substrate-binding site is contributed by S511. 626–629 (GPGR) is a substrate binding site. Residues R654, Q724, and 724–728 (QVCGG) each bind FAD. A substrate-binding site is contributed by G752. FAD is bound by residues 753–755 (PDE) and E755.

This sequence belongs to the acyl-CoA dehydrogenase family. In terms of assembly, homodimer. It depends on FAD as a cofactor.

It localises to the peroxisome. Its subcellular location is the mitochondrion membrane. The enzyme catalyses a 2,3-saturated acyl-CoA + oxidized [electron-transfer flavoprotein] + H(+) = a (2E)-enoyl-CoA + reduced [electron-transfer flavoprotein]. It carries out the reaction docosanoyl-CoA + oxidized [electron-transfer flavoprotein] + H(+) = (2E)-docosenoyl-CoA + reduced [electron-transfer flavoprotein]. It catalyses the reaction tetracosanoyl-CoA + oxidized [electron-transfer flavoprotein] + H(+) = (2E)-tetracosenoyl-CoA + reduced [electron-transfer flavoprotein]. The catalysed reaction is eicosanoyl-CoA + oxidized [electron-transfer flavoprotein] + H(+) = (2E)-eicosenoyl-CoA + reduced [electron-transfer flavoprotein]. The enzyme catalyses hexacosanoyl-CoA + oxidized [electron-transfer flavoprotein] + H(+) = (2E)-hexacosenoyl-CoA + reduced [electron-transfer flavoprotein]. It carries out the reaction tricosanoyl-CoA + oxidized [electron-transfer flavoprotein] + H(+) = (2E)-tricosenoyl-CoA + reduced [electron-transfer flavoprotein]. It participates in lipid metabolism; fatty acid beta-oxidation. In terms of biological role, acyl-CoA dehydrogenase, that exhibits maximal activity towards saturated C22-CoA. Probably participates in beta-oxydation and energy production but could also play a role in the metabolism of specific fatty acids to control fatty acids composition of cellular lipids in brain. In Gallus gallus (Chicken), this protein is Acyl-CoA dehydrogenase family member 11 (ACAD11).